A 370-amino-acid chain; its full sequence is GDSL esterase/lipase At1g33811 (370 aa).

The N-terminal stretch at 1-24 (MGILRFVLLISLNLVLFGFKTTVS) is a signal peptide. Catalysis depends on Ser41, which acts as the Nucleophile. Asn203, Asn241, and Asn242 each carry an N-linked (GlcNAc...) asparagine glycan. Catalysis depends on residues Asp336 and His339.

This sequence belongs to the 'GDSL' lipolytic enzyme family.

The protein resides in the secreted. This chain is GDSL esterase/lipase At1g33811, found in Arabidopsis thaliana (Mouse-ear cress).